Consider the following 141-residue polypeptide: Large ribosomal subunit protein uL11 (141 aa).

This sequence belongs to the universal ribosomal protein uL11 family. In terms of assembly, part of the ribosomal stalk of the 50S ribosomal subunit. Interacts with L10 and the large rRNA to form the base of the stalk. L10 forms an elongated spine to which L12 dimers bind in a sequential fashion forming a multimeric L10(L12)X complex. In terms of processing, one or more lysine residues are methylated.

Functionally, forms part of the ribosomal stalk which helps the ribosome interact with GTP-bound translation factors. This is Large ribosomal subunit protein uL11 from Streptococcus sanguinis (strain SK36).